Here is a 257-residue protein sequence, read N- to C-terminus: Short chain dehydrogenase ausX (257 aa).

Positions 11, 57, 119, 151, 155, and 184 each coordinate NADP(+). Y151 functions as the Proton acceptor in the catalytic mechanism. K155 serves as the catalytic Lowers pKa of active site Tyr.

Belongs to the short-chain dehydrogenases/reductases (SDR) family.

It functions in the pathway secondary metabolite biosynthesis; terpenoid biosynthesis. In terms of biological role, short chain dehydrogenase; part of the gene cluster that mediates the biosynthesis of calidodehydroaustin, a fungal meroterpenoid. The first step of the pathway is the synthesis of 3,5-dimethylorsellinic acid by the polyketide synthase ausA. 3,5-dimethylorsellinic acid is then prenylated by the polyprenyl transferase ausN. Further epoxidation by the FAD-dependent monooxygenase ausM and cyclization by the probable terpene cyclase ausL lead to the formation of protoaustinoid A. Protoaustinoid A is then oxidized to spiro-lactone preaustinoid A3 by the combined action of the FAD-binding monooxygenases ausB and ausC, and the dioxygenase ausE. Acid-catalyzed keto-rearrangement and ring contraction of the tetraketide portion of preaustinoid A3 by ausJ lead to the formation of preaustinoid A4. The aldo-keto reductase ausK, with the help of ausH, is involved in the next step by transforming preaustinoid A4 into isoaustinone which is in turn hydroxylated by the P450 monooxygenase ausI to form austinolide. The cytochrome P450 monooxygenase ausG modifies austinolide to austinol. Austinol is further acetylated to austin by the O-acetyltransferase ausP, which spontaneously changes to dehydroaustin. The cytochrome P450 monooxygenase ausR then converts dehydroaustin is into 7-dehydrodehydroaustin. The hydroxylation catalyzed by ausR permits the O-acetyltransferase ausQ to add an additional acetyl group to the molecule, leading to the formation of acetoxydehydroaustin. The short chain dehydrogenase ausT catalyzes the reduction of the double bond present between carbon atoms 1 and 2 to convert 7-dehydrodehydroaustin into 1,2-dihydro-7-hydroxydehydroaustin. AusQ catalyzes not only an acetylation reaction but also the addition of the PKS ausV diketide product to 1,2-dihydro-7-hydroxydehydroaustin, forming precalidodehydroaustin. Finally, the iron/alpha-ketoglutarate-dependent dioxygenase converts precalidodehydroaustin into calidodehydroaustin. The chain is Short chain dehydrogenase ausX from Aspergillus calidoustus.